We begin with the raw amino-acid sequence, 246 residues long: Probable transcriptional regulatory protein RB5500 (246 aa).

The protein belongs to the TACO1 family.

Its subcellular location is the cytoplasm. The chain is Probable transcriptional regulatory protein RB5500 from Rhodopirellula baltica (strain DSM 10527 / NCIMB 13988 / SH1).